A 230-amino-acid chain; its full sequence is Orotidine 5'-phosphate decarboxylase (230 aa).

Residues Asp10, Lys31, 58–67 (DLKLHDIPNT), Thr117, Arg179, Gln188, Gly208, and Arg209 contribute to the substrate site. The Proton donor role is filled by Lys60.

The protein belongs to the OMP decarboxylase family. Type 1 subfamily. In terms of assembly, homodimer.

The enzyme catalyses orotidine 5'-phosphate + H(+) = UMP + CO2. Its pathway is pyrimidine metabolism; UMP biosynthesis via de novo pathway; UMP from orotate: step 2/2. In terms of biological role, catalyzes the decarboxylation of orotidine 5'-monophosphate (OMP) to uridine 5'-monophosphate (UMP). In Staphylococcus aureus (strain Mu3 / ATCC 700698), this protein is Orotidine 5'-phosphate decarboxylase.